A 369-amino-acid polypeptide reads, in one-letter code: 3-dehydroquinate synthase (369 aa).

Residues 75 to 80 (DGEEHK), 109 to 113 (GVIGD), 133 to 134 (TT), K146, K155, and 173 to 176 (TLKT) each bind NAD(+). Residues E188, H251, and H268 each contribute to the Zn(2+) site.

Belongs to the sugar phosphate cyclases superfamily. Dehydroquinate synthase family. Co(2+) serves as cofactor. The cofactor is Zn(2+). It depends on NAD(+) as a cofactor.

The protein resides in the cytoplasm. It carries out the reaction 7-phospho-2-dehydro-3-deoxy-D-arabino-heptonate = 3-dehydroquinate + phosphate. The protein operates within metabolic intermediate biosynthesis; chorismate biosynthesis; chorismate from D-erythrose 4-phosphate and phosphoenolpyruvate: step 2/7. Functionally, catalyzes the conversion of 3-deoxy-D-arabino-heptulosonate 7-phosphate (DAHP) to dehydroquinate (DHQ). This Legionella pneumophila (strain Paris) protein is 3-dehydroquinate synthase.